We begin with the raw amino-acid sequence, 214 residues long: Osteoclast-stimulating factor 1 (214 aa).

Residues 12–71 enclose the SH3 domain; the sequence is GQVKVFRALYTFEPRTPDELYFEEGDILYIADMSDTNWWKGTCKGKTGLIPSNYVAEQAE. ANK repeat units lie at residues 72–101, 105–135, and 139–168; these read SIDN…GVNG, AGST…ELNQ, and LGDT…RTDL.

The protein localises to the cytoplasm. In terms of biological role, induces bone resorption, acting probably through a signaling cascade which results in the secretion of factor(s) enhancing osteoclast formation and activity. The sequence is that of Osteoclast-stimulating factor 1 (ostf1) from Xenopus laevis (African clawed frog).